Reading from the N-terminus, the 175-residue chain is ADP-ribosylation factor 6 (175 aa).

G2 carries N-myristoyl glycine lipidation. K3 carries the N6-myristoyl lysine lipid modification. GTP-binding positions include 23–28, 41–44, 63–67, 122–125, and 155–156; these read AAGKTT, TIPT, DVGGQ, NKQD, and CA.

Belongs to the small GTPase superfamily. Arf family.

The protein localises to the cytoplasm. It localises to the cytosol. Its subcellular location is the cell membrane. It is found in the endosome membrane. The protein resides in the recycling endosome membrane. The protein localises to the cell projection. It localises to the filopodium membrane. Its subcellular location is the ruffle. It is found in the cleavage furrow. The protein resides in the midbody. The protein localises to the midbody ring. It localises to the golgi apparatus. It catalyses the reaction GTP + H2O = GDP + phosphate + H(+). Its function is as follows. GTP-binding protein involved in protein trafficking; regulates endocytic recycling and cytoskeleton remodeling. May modulate vesicle budding and uncoating within the Golgi apparatus. May contribute to the regulation of dendritic branching, filopodia extension and dendritic spine development. The protein is ADP-ribosylation factor 6 (arf6) of Xenopus laevis (African clawed frog).